A 392-amino-acid chain; its full sequence is Sulfate adenylyltransferase (392 aa).

Belongs to the sulfate adenylyltransferase family.

It catalyses the reaction sulfate + ATP + H(+) = adenosine 5'-phosphosulfate + diphosphate. It functions in the pathway sulfur metabolism; hydrogen sulfide biosynthesis; sulfite from sulfate: step 1/3. The sequence is that of Sulfate adenylyltransferase from Nostoc punctiforme (strain ATCC 29133 / PCC 73102).